Reading from the N-terminus, the 465-residue chain is Kynurenine 3-monooxygenase (465 aa).

The interval 1–26 is disordered; sequence MSPGIVSQEVNGRQEPTEAARDERHG. Over residues 15–25 the composition is skewed to basic and acidic residues; that stretch reads EPTEAARDERH. The next 2 helical transmembrane spans lie at 405-427 and 440-462; these read LLFR…SMPY and LLKR…IYAQ.

This sequence belongs to the aromatic-ring hydroxylase family. KMO subfamily. Requires FAD as cofactor.

It is found in the mitochondrion. The protein localises to the membrane. It catalyses the reaction L-kynurenine + NADPH + O2 + H(+) = 3-hydroxy-L-kynurenine + NADP(+) + H2O. It functions in the pathway cofactor biosynthesis; NAD(+) biosynthesis; quinolinate from L-kynurenine: step 1/3. Its function is as follows. Catalyzes the hydroxylation of L-kynurenine (L-Kyn) to form 3-hydroxy-L-kynurenine (L-3OHKyn). Required for synthesis of quinolinic acid. The sequence is that of Kynurenine 3-monooxygenase from Drosophila melanogaster (Fruit fly).